Reading from the N-terminus, the 107-residue chain is Small polypeptide DEVIL 9 (107 aa).

A compositionally biased stretch (basic and acidic residues) spans 1-12 (MDEKWRLSKKDA). The disordered stretch occupies residues 1–79 (MDEKWRLSKK…EKGSITQKYS (79 aa)). Residues 9–29 (KKDALAASCSSSSTSSKSKFS) traverse the membrane as a helical segment. Positions 13-65 (LAASCSSSSTSSKSKFSRSFSTSASSSKAPAFVRSSSTKCSVPSSSSSSISRS) are enriched in low complexity. Residues 73 to 104 (SITQKYSSLAKEQKGRFYIMRRCVAMLVCWHK) are required for DVL/RTFL small polypeptide activity.

It belongs to the DVL/RTFL small polypeptides family.

Its subcellular location is the cell membrane. Its function is as follows. Small polypeptide acting as a regulatory molecule which coordinates cellular responses required for differentiation, growth and development, probably by restricting polar cell proliferation in lateral organs and coordinating socket cell recruitment and differentiation at trichome sites. The chain is Small polypeptide DEVIL 9 from Arabidopsis thaliana (Mouse-ear cress).